The chain runs to 527 residues: Catalase (527 aa).

The segment covering 1–22 (MSDSRDPASDQMKQWKEQRASQ) has biased composition (basic and acidic residues). Residues 1–34 (MSDSRDPASDQMKQWKEQRASQRPDVLTTGGGNP) are disordered. Ser2 bears the N-acetylserine mark. The residue at position 9 (Ser9) is a Phosphoserine. Position 13 is an N6-succinyllysine (Lys13). At Ser21 the chain carries Phosphoserine. Residues His75 and Asn148 contribute to the active site. 4 residues coordinate NADP(+): His194, Ser201, Arg203, and Asn213. Lys221 is subject to N6-succinyllysine. Lys233 is subject to N6-acetyllysine. Positions 237, 303, 305, and 306 each coordinate NADP(+). The residue at position 306 (Lys306) is an N6-acetyllysine; alternate. Lys306 carries the post-translational modification N6-succinyllysine; alternate. Tyr358 serves as a coordination point for heme. Ser417 and Ser422 each carry phosphoserine. Lys430 bears the N6-acetyllysine; alternate mark. Position 430 is an N6-succinyllysine; alternate (Lys430). At Ser434 the chain carries Phosphoserine. N6-acetyllysine; alternate occurs at positions 449 and 480. 2 positions are modified to N6-succinyllysine; alternate: Lys449 and Lys480. An N6-acetyllysine modification is found at Lys499. Phosphothreonine is present on Thr511. Ser517 is subject to Phosphoserine. Lys522 carries the N6-succinyllysine modification. Residues 524 to 527 (KANL) carry the Microbody targeting signal; atypical motif.

Belongs to the catalase family. As to quaternary structure, homotetramer. Interacts (via microbody targeting signal) with PEX5, monomeric form interacts with PEX5, leading to its translocation into peroxisomes. Heme serves as cofactor. It depends on NADP(+) as a cofactor.

The protein localises to the peroxisome matrix. It carries out the reaction 2 H2O2 = O2 + 2 H2O. In terms of biological role, catalyzes the degradation of hydrogen peroxide (H(2)O(2)) generated by peroxisomal oxidases to water and oxygen, thereby protecting cells from the toxic effects of hydrogen peroxide. Promotes growth of cells including T-cells, B-cells, myeloid leukemia cells, melanoma cells, mastocytoma cells and normal and transformed fibroblast cells. The polypeptide is Catalase (Cat) (Mus musculus (Mouse)).